The sequence spans 660 residues: DNA mismatch repair protein MutL (660 aa).

It belongs to the DNA mismatch repair MutL/HexB family.

This protein is involved in the repair of mismatches in DNA. It is required for dam-dependent methyl-directed DNA mismatch repair. May act as a 'molecular matchmaker', a protein that promotes the formation of a stable complex between two or more DNA-binding proteins in an ATP-dependent manner without itself being part of a final effector complex. This Streptococcus pyogenes serotype M3 (strain ATCC BAA-595 / MGAS315) protein is DNA mismatch repair protein MutL.